A 311-amino-acid polypeptide reads, in one-letter code: Ferritin-like catalase Nec2 (311 aa).

The N-terminal stretch at M1–S25 is a signal peptide. Residues N128, N257, and N289 are each glycosylated (N-linked (GlcNAc...) asparagine).

Forms homomultimers. In terms of tissue distribution, observed in all flowers organs; mainly expressed in nectaries and, to a lower extent, in petals and ovules, as well as in stigmas and calyx at low levels.

The catalysed reaction is 2 H2O2 = O2 + 2 H2O. In terms of biological role, involved in the production of blood-red nectar containing the alkaloid nesocodin and that serves as a visual attractant for pollinator visitation, including vertebrates such as Phelsuma geckos. The nectar is initially acidic and pale yellow, but slowly becomes alkaline before turning into red within 24 hours. Together with NEC1 and NEC3, facilitates the condensation of sinapaldehyde ((E)-3,5-dimethoxy-4-hydroxycinnamaldehyde) and proline to form nesocodin, a pigment with a stable imine bond. Protects nesocodin from degradation by hydrogen peroxide H(2)O(2) by catalyzing the degradation of H(2)O(2) into water H(2)O and dioxygene O(2). The chain is Ferritin-like catalase Nec2 from Nesocodon mauritianus (Blue Mauritius bellflower).